Consider the following 350-residue polypeptide: MLSSQHRLVTQPAIRAYEAFSAPGFGFNSKLLDDAFGGSGLKRGYISEVCGAPGMGKTSLALQITANALLSGSRVIWVETCQPIPMERLRQLLDNHVPSSQDEEEKCDTDELLNLLDVVYAPNLVNILAFLRNFDQEKHLKEIGLLIIDNLSMPIQLAYPTSPEDYAYLRLRRNTSKKSSLSDSSQKENTLTLNKENEFSSKDDSNFAFHNSSTKTTINRRKKAIGTISSLLSKITSSCYVAIFVTTQMTSKVVSGIGAKLIPLLSTNWLDNLSYRLILYSRHSTEESKDGQSRPSHQLLRYAFMAKQPPAHSAESELAFQLTSTGIQDYQSIPTNSSQRRKRSILECES.

Residue 51–58 coordinates ATP; it reads GAPGMGKT. The disordered stretch occupies residues 331–350; sequence QSIPTNSSQRRKRSILECES.

Belongs to the RecA family. RAD55 subfamily.

It localises to the nucleus. Its function is as follows. Required for radiation resistance and meiotic viability and acts in recombination and recombinational DNA repair pathways. The chain is DNA repair protein rhp55 (rhp55) from Schizosaccharomyces pombe (strain 972 / ATCC 24843) (Fission yeast).